The sequence spans 615 residues: 1-deoxy-D-xylulose-5-phosphate synthase (615 aa).

Residues His72 and 113-115 (GHA) each bind thiamine diphosphate. Mg(2+) is bound at residue Asp144. Thiamine diphosphate is bound by residues 145–146 (GA), Asn173, Tyr281, and Glu360. A Mg(2+)-binding site is contributed by Asn173.

Belongs to the transketolase family. DXPS subfamily. As to quaternary structure, homodimer. It depends on Mg(2+) as a cofactor. Requires thiamine diphosphate as cofactor.

The catalysed reaction is D-glyceraldehyde 3-phosphate + pyruvate + H(+) = 1-deoxy-D-xylulose 5-phosphate + CO2. It participates in metabolic intermediate biosynthesis; 1-deoxy-D-xylulose 5-phosphate biosynthesis; 1-deoxy-D-xylulose 5-phosphate from D-glyceraldehyde 3-phosphate and pyruvate: step 1/1. In terms of biological role, catalyzes the acyloin condensation reaction between C atoms 2 and 3 of pyruvate and glyceraldehyde 3-phosphate to yield 1-deoxy-D-xylulose-5-phosphate (DXP). The chain is 1-deoxy-D-xylulose-5-phosphate synthase from Thermus thermophilus (strain ATCC 27634 / DSM 579 / HB8).